Consider the following 131-residue polypeptide: D-ribose pyranase (131 aa).

Residue His-20 is the Proton donor of the active site. Substrate is bound by residues Asp-28, His-98, and 120–122 (YAN).

This sequence belongs to the RbsD / FucU family. RbsD subfamily. In terms of assembly, homodecamer.

It is found in the cytoplasm. The enzyme catalyses beta-D-ribopyranose = beta-D-ribofuranose. It functions in the pathway carbohydrate metabolism; D-ribose degradation; D-ribose 5-phosphate from beta-D-ribopyranose: step 1/2. Its function is as follows. Catalyzes the interconversion of beta-pyran and beta-furan forms of D-ribose. The chain is D-ribose pyranase from Bacillus velezensis (strain DSM 23117 / BGSC 10A6 / LMG 26770 / FZB42) (Bacillus amyloliquefaciens subsp. plantarum).